A 136-amino-acid chain; its full sequence is Large ribosomal subunit protein uL16 (136 aa).

It belongs to the universal ribosomal protein uL16 family. In terms of assembly, part of the 50S ribosomal subunit.

Binds 23S rRNA and is also seen to make contacts with the A and possibly P site tRNAs. The chain is Large ribosomal subunit protein uL16 from Orientia tsutsugamushi (strain Boryong) (Rickettsia tsutsugamushi).